Here is a 785-residue protein sequence, read N- to C-terminus: Cadherin-7 (785 aa).

Residues methionine 1–alanine 27 form the signal peptide. A propeptide spanning residues glutamate 28–arginine 47 is cleaved from the precursor. The Extracellular portion of the chain corresponds to serine 48–threonine 607. Cadherin domains are found at residues tryptophan 49–phenylalanine 153, leucine 154–phenylalanine 262, proline 263–phenylalanine 377, threonine 378–phenylalanine 482, and phenylalanine 482–tyrosine 599. Asparagine 449 and asparagine 530 each carry an N-linked (GlcNAc...) asparagine glycan. The helical transmembrane segment at glycine 608–valine 628 threads the bilayer. The Cytoplasmic segment spans residues threonine 629 to serine 785.

It is found in the cell membrane. In terms of biological role, cadherins are calcium-dependent cell adhesion proteins. They preferentially interact with themselves in a homophilic manner in connecting cells; cadherins may thus contribute to the sorting of heterogeneous cell types. This Gallus gallus (Chicken) protein is Cadherin-7 (CDH7).